Consider the following 175-residue polypeptide: Ribonuclease M5 (175 aa).

In terms of domain architecture, Toprim spans Asn3–Ser83. Residues Glu9, Asp57, and Asp59 each coordinate Mg(2+).

It belongs to the ribonuclease M5 family. Requires Mg(2+) as cofactor.

The protein localises to the cytoplasm. It carries out the reaction Endonucleolytic cleavage of RNA, removing 21 and 42 nucleotides, respectively, from the 5'- and 3'-termini of a 5S-rRNA precursor.. Its function is as follows. Required for correct processing of both the 5' and 3' ends of 5S rRNA precursor. Cleaves both sides of a double-stranded region yielding mature 5S rRNA in one step. The chain is Ribonuclease M5 from Mesoplasma florum (strain ATCC 33453 / NBRC 100688 / NCTC 11704 / L1) (Acholeplasma florum).